A 475-amino-acid chain; its full sequence is MTVSQIPIAAIATAPGRGGIGVVRVSGPDVGAVMRAVCGRALQPRHATYLPFLDARGNVIDHGLALYFPAPNSYTGEEVLELQGHGGPVVMQMLLSRCLEAGKDIGLRVAEPGEFTRRAFLNDKLDLAQAEAVADLIEASTEAAARSAARSMEGEFSKAIHALVEKVIHLRMLVEATLDFPEEEIDFLEASNARGQLTRIREDLAGVLKQARQGSLLREGLSVVLAGQPNVGKSSLLNALAGSDLAIVTPIAGTTRDRVRETIQIDGIPLHIIDTAGLRDDAADEVERIGIERTWEAIRHADIVLHLIDAADYIEHGISETDDHIDDRLSGQLPPGSPIVRVINKIDLAPSVGAMGFGGNRPHVVAANGPNPTEIWISARTGAGIDLMRSELLRLIGWQSGNEGAFLARERHLIALRNAESHLELAEASASQHAQALDLFAEELRLAQDHLNSITGEFTSDDLLGTIFTRFCIGK.

(6S)-5-formyl-5,6,7,8-tetrahydrofolate is bound by residues arginine 24, glutamate 81, and lysine 124. A TrmE-type G domain is found at 220-397 (GLSVVLAGQP…MRSELLRLIG (178 aa)). A K(+)-binding site is contributed by asparagine 230. GTP is bound by residues 230–235 (NVGKSS), 249–255 (TPIAGTT), 274–277 (DTAG), and 378–380 (SAR). Mg(2+) is bound at residue serine 234. Threonine 249, isoleucine 251, and threonine 254 together coordinate K(+). Threonine 255 lines the Mg(2+) pocket. Lysine 475 contacts (6S)-5-formyl-5,6,7,8-tetrahydrofolate.

It belongs to the TRAFAC class TrmE-Era-EngA-EngB-Septin-like GTPase superfamily. TrmE GTPase family. Homodimer. Heterotetramer of two MnmE and two MnmG subunits. It depends on K(+) as a cofactor.

The protein resides in the cytoplasm. Functionally, exhibits a very high intrinsic GTPase hydrolysis rate. Involved in the addition of a carboxymethylaminomethyl (cmnm) group at the wobble position (U34) of certain tRNAs, forming tRNA-cmnm(5)s(2)U34. The polypeptide is tRNA modification GTPase MnmE (Cupriavidus metallidurans (strain ATCC 43123 / DSM 2839 / NBRC 102507 / CH34) (Ralstonia metallidurans)).